A 1439-amino-acid chain; its full sequence is Gag-Pol polyprotein (1439 aa).

G2 is lipidated: N-myristoyl glycine; by host. The interval 7–31 (ILRGEKLDAWEKIKLRPGGKKHYML) is interaction with Gp41. The segment at 8-43 (LRGEKLDAWEKIKLRPGGKKHYMLKHLVWANRELEK) is interaction with host CALM1. The tract at residues 12 to 19 (KLDAWEKI) is interaction with host AP3D1. The tract at residues 14-33 (DAWEKIKLRPGGKKHYMLKH) is interaction with membrane phosphatidylinositol 4,5-bisphosphate and RNA. Positions 16–22 (WEKIKLR) match the Nuclear export signal motif. The Nuclear localization signal signature appears at 26–32 (KKHYMLK). Residues 73–77 (EELKS) form an interaction with membrane phosphatidylinositol 4,5-bisphosphate region. Residues 105-128 (EEEQNESQQKTQQAGAADRGKDSQ) are disordered. Y130 bears the Phosphotyrosine; by host mark. The segment at 187 to 225 (NTVGGHQAAMQMLKDTINEEAAEWDRLHPVHAGPVAPGQ) is interaction with human PPIA/CYPA and NUP153. Residues 275–361 (YSPVSILDIK…GGPAHKARVL (87 aa)) are dimerization/Multimerization of capsid protein p24. 2 consecutive CCHC-type zinc fingers follow at residues 387 to 404 (IKCF…NCRA) and 408 to 425 (KGCW…DCTE). The tract at residues 441–485 (KAREFPSEQTRANSPTRESQTRANSPTTRELQVRGSNTFSEAGAE) is disordered. Over residues 447 to 480 (SEQTRANSPTRESQTRANSPTTRELQVRGSNTFS) the composition is skewed to polar residues. The tract at residues 493 to 497 (PQITL) is dimerization of protease. A Peptidase A2 domain is found at 512–581 (KEALLDTGAD…TPVNIIGRNM (70 aa)). The active-site For protease activity; shared with dimeric partner is the D517. Dimerization of protease regions lie at residues 541–547 (GIGGFIK) and 580–592 (NMLT…LNFP). The Reverse transcriptase domain maps to 635–825 (EGKISRIGPE…PPFLWMGYEL (191 aa)). Residues D701, D776, and D777 each contribute to the Mg(2+) site. Residues 818–826 (FLWMGYELH) form an RT 'primer grip' region. The Tryptophan repeat motif motif lies at 989 to 1005 (WEAWWTDYWQATWIPEW). Positions 1025–1148 (IAGVETFYVD…VDKLVSSGIR (124 aa)) constitute an RNase H type-1 domain. Residues D1034, E1069, D1089, and D1140 each coordinate Mg(2+). An Integrase-type zinc finger spans residues 1154-1195 (DGIDKAQEEHEKYHSNWRAMANEFNIPPVVPKEIVACCDKCQ). The Zn(2+) site is built by H1163, H1167, C1191, and C1194. The 151-residue stretch at 1205–1355 (VNCSPGIWQL…SAGERIIDII (151 aa)) folds into the Integrase catalytic domain. Residues D1215, D1267, and E1303 each contribute to the Mg(2+) site. The segment at residues 1374 to 1421 (FRVYYRDSRDPIWKGPAKLLWKGEGAVVIQDNSDIKVVPRRKAKIIRD) is a DNA-binding region (integrase-type).

In terms of assembly, homotrimer; further assembles as hexamers of trimers. Interacts with gp41 (via C-terminus). Interacts with host CALM1; this interaction induces a conformational change in the Matrix protein, triggering exposure of the myristate group. Interacts with host AP3D1; this interaction allows the polyprotein trafficking to multivesicular bodies during virus assembly. Part of the pre-integration complex (PIC) which is composed of viral genome, matrix protein, Vpr and integrase. As to quaternary structure, homodimer; the homodimer further multimerizes as homohexamers or homopentamers. Interacts with human PPIA/CYPA; This interaction stabilizes the capsid. Interacts with human NUP153. Interacts with host PDZD8; this interaction stabilizes the capsid. Interacts with monkey TRIM5; this interaction destabilizes the capsid. Homodimer, whose active site consists of two apposed aspartic acid residues. In terms of assembly, heterodimer of p66 RT and p51 RT (RT p66/p51). Heterodimerization of RT is essential for DNA polymerase activity. The overall folding of the subdomains is similar in p66 RT and p51 RT but the spatial arrangements of the subdomains are dramatically different. As to quaternary structure, homotetramer; may further associate as a homohexadecamer. Part of the pre-integration complex (PIC) which is composed of viral genome, matrix protein, Vpr and integrase. Interacts with human SMARCB1/INI1 and human PSIP1/LEDGF isoform 1. Interacts with human KPNA3; this interaction might play a role in nuclear import of the pre-integration complex. Interacts with human NUP153; this interaction might play a role in nuclear import of the pre-integration complex. The cofactor is Mg(2+). Post-translationally, specific enzymatic cleavages by the viral protease yield mature proteins. The protease is released by autocatalytic cleavage. The polyprotein is cleaved during and after budding, this process is termed maturation. Proteolytic cleavage of p66 RT removes the RNase H domain to yield the p51 RT subunit. Nucleocapsid protein p7 might be further cleaved after virus entry. Tyrosine phosphorylated presumably in the virion by a host kinase. Phosphorylation is apparently not a major regulator of membrane association. In terms of processing, phosphorylated possibly by host MAPK1; this phosphorylation is necessary for Pin1-mediated virion uncoating. Post-translationally, methylated by host PRMT6, impairing its function by reducing RNA annealing and the initiation of reverse transcription.

The protein resides in the host cell membrane. It localises to the host endosome. The protein localises to the host multivesicular body. It is found in the virion membrane. Its subcellular location is the host nucleus. The protein resides in the host cytoplasm. It localises to the virion. The catalysed reaction is Specific for a P1 residue that is hydrophobic, and P1' variable, but often Pro.. The enzyme catalyses Endohydrolysis of RNA in RNA/DNA hybrids. Three different cleavage modes: 1. sequence-specific internal cleavage of RNA. Human immunodeficiency virus type 1 and Moloney murine leukemia virus enzymes prefer to cleave the RNA strand one nucleotide away from the RNA-DNA junction. 2. RNA 5'-end directed cleavage 13-19 nucleotides from the RNA end. 3. DNA 3'-end directed cleavage 15-20 nucleotides away from the primer terminus.. It carries out the reaction 3'-end directed exonucleolytic cleavage of viral RNA-DNA hybrid.. It catalyses the reaction DNA(n) + a 2'-deoxyribonucleoside 5'-triphosphate = DNA(n+1) + diphosphate. With respect to regulation, protease: The viral protease is inhibited by many synthetic protease inhibitors (PIs), such as amprenavir, atazanavir, indinavir, loprinavir, nelfinavir, ritonavir and saquinavir. Use of protease inhibitors in tritherapy regimens permit more ambitious therapeutic strategies. Reverse transcriptase/ribonuclease H: RT can be inhibited either by nucleoside RT inhibitors (NRTIs) or by non nucleoside RT inhibitors (NNRTIs). NRTIs act as chain terminators, whereas NNRTIs inhibit DNA polymerization by binding a small hydrophobic pocket near the RT active site and inducing an allosteric change in this region. Classical NRTIs are abacavir, adefovir (PMEA), didanosine (ddI), lamivudine (3TC), stavudine (d4T), tenofovir (PMPA), zalcitabine (ddC), and zidovudine (AZT). Classical NNRTIs are atevirdine (BHAP U-87201E), delavirdine, efavirenz (DMP-266), emivirine (I-EBU), and nevirapine (BI-RG-587). The tritherapies used as a basic effective treatment of AIDS associate two NRTIs and one NNRTI. Mediates, with Gag polyprotein, the essential events in virion assembly, including binding the plasma membrane, making the protein-protein interactions necessary to create spherical particles, recruiting the viral Env proteins, and packaging the genomic RNA via direct interactions with the RNA packaging sequence (Psi). Gag-Pol polyprotein may regulate its own translation, by the binding genomic RNA in the 5'-UTR. At low concentration, the polyprotein would promote translation, whereas at high concentration, the polyprotein would encapsidate genomic RNA and then shut off translation. Functionally, targets the polyprotein to the plasma membrane via a multipartite membrane-binding signal, that includes its myristoylated N-terminus. Matrix protein is part of the pre-integration complex. Implicated in the release from host cell mediated by Vpu. Binds to RNA. In terms of biological role, forms the conical core that encapsulates the genomic RNA-nucleocapsid complex in the virion. Most core are conical, with only 7% tubular. The core is constituted by capsid protein hexamer subunits. The core is disassembled soon after virion entry. Host restriction factors such as TRIM5-alpha or TRIMCyp bind retroviral capsids and cause premature capsid disassembly, leading to blocks in reverse transcription. Capsid restriction by TRIM5 is one of the factors which restricts HIV-1 to the human species. Host PIN1 apparently facilitates the virion uncoating. On the other hand, interactions with PDZD8 or CYPA stabilize the capsid. Its function is as follows. Encapsulates and protects viral dimeric unspliced genomic RNA (gRNA). Binds these RNAs through its zinc fingers. Acts as a nucleic acid chaperone which is involved in rearangement of nucleic acid secondary structure during gRNA retrotranscription. Also facilitates template switch leading to recombination. As part of the polyprotein, participates in gRNA dimerization, packaging, tRNA incorporation and virion assembly. Aspartyl protease that mediates proteolytic cleavages of Gag and Gag-Pol polyproteins during or shortly after the release of the virion from the plasma membrane. Cleavages take place as an ordered, step-wise cascade to yield mature proteins. This process is called maturation. Displays maximal activity during the budding process just prior to particle release from the cell. Also cleaves Nef and Vif, probably concomitantly with viral structural proteins on maturation of virus particles. Hydrolyzes host EIF4GI and PABP1 in order to shut off the capped cellular mRNA translation. The resulting inhibition of cellular protein synthesis serves to ensure maximal viral gene expression and to evade host immune response. Also mediates cleavage of host YTHDF3. Mediates cleavage of host CARD8, thereby activating the CARD8 inflammasome, leading to the clearance of latent HIV-1 in patient CD4(+) T-cells after viral reactivation; in contrast, HIV-1 can evade CARD8-sensing when its protease remains inactive in infected cells prior to viral budding. Functionally, multifunctional enzyme that converts the viral RNA genome into dsDNA in the cytoplasm, shortly after virus entry into the cell. This enzyme displays a DNA polymerase activity that can copy either DNA or RNA templates, and a ribonuclease H (RNase H) activity that cleaves the RNA strand of RNA-DNA heteroduplexes in a partially processive 3' to 5' endonucleasic mode. Conversion of viral genomic RNA into dsDNA requires many steps. A tRNA(3)-Lys binds to the primer-binding site (PBS) situated at the 5'-end of the viral RNA. RT uses the 3' end of the tRNA primer to perform a short round of RNA-dependent minus-strand DNA synthesis. The reading proceeds through the U5 region and ends after the repeated (R) region which is present at both ends of viral RNA. The portion of the RNA-DNA heteroduplex is digested by the RNase H, resulting in a ssDNA product attached to the tRNA primer. This ssDNA/tRNA hybridizes with the identical R region situated at the 3' end of viral RNA. This template exchange, known as minus-strand DNA strong stop transfer, can be either intra- or intermolecular. RT uses the 3' end of this newly synthesized short ssDNA to perform the RNA-dependent minus-strand DNA synthesis of the whole template. RNase H digests the RNA template except for two polypurine tracts (PPTs) situated at the 5'-end and near the center of the genome. It is not clear if both polymerase and RNase H activities are simultaneous. RNase H probably can proceed both in a polymerase-dependent (RNA cut into small fragments by the same RT performing DNA synthesis) and a polymerase-independent mode (cleavage of remaining RNA fragments by free RTs). Secondly, RT performs DNA-directed plus-strand DNA synthesis using the PPTs that have not been removed by RNase H as primers. PPTs and tRNA primers are then removed by RNase H. The 3' and 5' ssDNA PBS regions hybridize to form a circular dsDNA intermediate. Strand displacement synthesis by RT to the PBS and PPT ends produces a blunt ended, linear dsDNA copy of the viral genome that includes long terminal repeats (LTRs) at both ends. In terms of biological role, catalyzes viral DNA integration into the host chromosome, by performing a series of DNA cutting and joining reactions. This enzyme activity takes place after virion entry into a cell and reverse transcription of the RNA genome in dsDNA. The first step in the integration process is 3' processing. This step requires a complex comprising the viral genome, matrix protein, Vpr and integrase. This complex is called the pre-integration complex (PIC). The integrase protein removes 2 nucleotides from each 3' end of the viral DNA, leaving recessed CA OH's at the 3' ends. In the second step, the PIC enters cell nucleus. This process is mediated through integrase and Vpr proteins, and allows the virus to infect a non dividing cell. This ability to enter the nucleus is specific of lentiviruses, other retroviruses cannot and rely on cell division to access cell chromosomes. In the third step, termed strand transfer, the integrase protein joins the previously processed 3' ends to the 5' ends of strands of target cellular DNA at the site of integration. The 5'-ends are produced by integrase-catalyzed staggered cuts, 5 bp apart. A Y-shaped, gapped, recombination intermediate results, with the 5'-ends of the viral DNA strands and the 3' ends of target DNA strands remaining unjoined, flanking a gap of 5 bp. The last step is viral DNA integration into host chromosome. This involves host DNA repair synthesis in which the 5 bp gaps between the unjoined strands are filled in and then ligated. Since this process occurs at both cuts flanking the HIV genome, a 5 bp duplication of host DNA is produced at the ends of HIV-1 integration. Alternatively, Integrase may catalyze the excision of viral DNA just after strand transfer, this is termed disintegration. The sequence is that of Gag-Pol polyprotein (gag-pol) from Human immunodeficiency virus type 1 group M subtype C (isolate ETH2220) (HIV-1).